A 137-amino-acid chain; its full sequence is ATP synthase epsilon chain, chloroplastic (137 aa).

The protein belongs to the ATPase epsilon chain family. In terms of assembly, F-type ATPases have 2 components, CF(1) - the catalytic core - and CF(0) - the membrane proton channel. CF(1) has five subunits: alpha(3), beta(3), gamma(1), delta(1), epsilon(1). CF(0) has three main subunits: a, b and c.

Its subcellular location is the plastid. The protein resides in the chloroplast thylakoid membrane. Its function is as follows. Produces ATP from ADP in the presence of a proton gradient across the membrane. In Sorghum bicolor (Sorghum), this protein is ATP synthase epsilon chain, chloroplastic.